Reading from the N-terminus, the 148-residue chain is Large ribosomal subunit protein bL9 (148 aa).

Belongs to the bacterial ribosomal protein bL9 family.

Binds to the 23S rRNA. This Listeria monocytogenes serotype 4a (strain HCC23) protein is Large ribosomal subunit protein bL9.